Reading from the N-terminus, the 459-residue chain is Exodeoxyribonuclease 7 large subunit (459 aa).

It belongs to the XseA family. Heterooligomer composed of large and small subunits.

The protein localises to the cytoplasm. It catalyses the reaction Exonucleolytic cleavage in either 5'- to 3'- or 3'- to 5'-direction to yield nucleoside 5'-phosphates.. In terms of biological role, bidirectionally degrades single-stranded DNA into large acid-insoluble oligonucleotides, which are then degraded further into small acid-soluble oligonucleotides. The sequence is that of Exodeoxyribonuclease 7 large subunit from Pseudomonas fluorescens (strain Pf0-1).